We begin with the raw amino-acid sequence, 141 residues long: Large ribosomal subunit protein uL16 (141 aa).

Belongs to the universal ribosomal protein uL16 family. In terms of assembly, part of the 50S ribosomal subunit.

Its function is as follows. Binds 23S rRNA and is also seen to make contacts with the A and possibly P site tRNAs. In Campylobacter lari (strain RM2100 / D67 / ATCC BAA-1060), this protein is Large ribosomal subunit protein uL16.